The sequence spans 203 residues: Protein GrpE 2 (203 aa).

Basic and acidic residues predominate over residues M1–A12. Residues M1–A64 are disordered. Positions G45–P56 are enriched in low complexity.

This sequence belongs to the GrpE family. Homodimer.

It is found in the cytoplasm. Functionally, participates actively in the response to hyperosmotic and heat shock by preventing the aggregation of stress-denatured proteins, in association with DnaK and GrpE. It is the nucleotide exchange factor for DnaK and may function as a thermosensor. Unfolded proteins bind initially to DnaJ; upon interaction with the DnaJ-bound protein, DnaK hydrolyzes its bound ATP, resulting in the formation of a stable complex. GrpE releases ADP from DnaK; ATP binding to DnaK triggers the release of the substrate protein, thus completing the reaction cycle. Several rounds of ATP-dependent interactions between DnaJ, DnaK and GrpE are required for fully efficient folding. This chain is Protein GrpE 2, found in Streptomyces avermitilis (strain ATCC 31267 / DSM 46492 / JCM 5070 / NBRC 14893 / NCIMB 12804 / NRRL 8165 / MA-4680).